The sequence spans 72 residues: Cell division protein ZapB (72 aa).

The stretch at 3 to 71 forms a coiled coil; the sequence is LSIIDQLEEK…LRSLLGQIDN (69 aa).

This sequence belongs to the ZapB family. In terms of assembly, homodimer. The ends of the coiled-coil dimer bind to each other, forming polymers. Interacts with FtsZ.

Its subcellular location is the cytoplasm. Its function is as follows. Non-essential, abundant cell division factor that is required for proper Z-ring formation. It is recruited early to the divisome by direct interaction with FtsZ, stimulating Z-ring assembly and thereby promoting cell division earlier in the cell cycle. Its recruitment to the Z-ring requires functional FtsA or ZipA. The polypeptide is Cell division protein ZapB (Haemophilus ducreyi (strain 35000HP / ATCC 700724)).